The sequence spans 153 residues: Movement protein TGB3 (153 aa).

Residues 1–50 are Cytoplasmic-facing; sequence MEAPAITHSSGCVCSDCQWSGSPTVDTKVYLGSGTHANTTKTRETSFLSV. A helical transmembrane segment spans residues 51–71; it reads LNDNAWLFVIAALILCLYFII. The Lumenal portion of the chain corresponds to 72–127; it reads SKPHVDAVYTEFHQDLNGFSMKLAPGVPIDPKVIAAVKNWQKYPFGTDPRENMVTS. The helical transmembrane segment at 128–148 threads the bilayer; the sequence is IVSGLRHSFCILLLVVVLLVY. Residues 149-153 lie on the Cytoplasmic side of the membrane; it reads VCHKP.

The protein belongs to the virgaviridae TGB3 movement protein family. As to quaternary structure, interacts with movement proteins TGB1 and TGB2. TGB1-TGB3-TGB2 complex formation is enhanced by ATP hydrolysis.

It is found in the host cell junction. Its subcellular location is the host plasmodesma. It localises to the host endoplasmic reticulum membrane. The protein localises to the host cytoplasm. The protein resides in the host cytoskeleton. Its function is as follows. Participates in the transport of viral genome to neighboring plant cells directly through plasmodesmata, without any budding. TGBp2 and TGBp3 are necessary for intracellular delivery of TGBp1-containing vRNPs to plasmodesmata. Can gate plasmodesmata and increase their size exclusion limit. Induces host actin cytoskeleton network thickening, which probably plays a major role in virus cell-to-cell movement. In Arachis hypogaea (Peanut), this protein is Movement protein TGB3.